The sequence spans 118 residues: Large ribosomal subunit protein bL19 (118 aa).

It belongs to the bacterial ribosomal protein bL19 family.

This protein is located at the 30S-50S ribosomal subunit interface and may play a role in the structure and function of the aminoacyl-tRNA binding site. This Campylobacter fetus subsp. fetus (strain 82-40) protein is Large ribosomal subunit protein bL19.